The sequence spans 205 residues: Protein N-terminal glutamine amidohydrolase (205 aa).

Residues Cys28, His81, and Asp97 contribute to the active site.

The protein belongs to the NTAQ1 family. In terms of assembly, monomer.

The protein localises to the cytoplasm. Its subcellular location is the cytosol. It localises to the nucleus. The catalysed reaction is N-terminal L-glutaminyl-[protein] + H2O = N-terminal L-glutamyl-[protein] + NH4(+). Its function is as follows. Mediates the side-chain deamidation of N-terminal glutamine residues to glutamate, an important step in N-end rule pathway of protein degradation. Conversion of the resulting N-terminal glutamine to glutamate renders the protein susceptible to arginylation, polyubiquitination and degradation as specified by the N-end rule. Does not act on substrates with internal or C-terminal glutamine and does not act on non-glutamine residues in any position. Does not deaminate acetylated N-terminal glutamine. With the exception of proline, all tested second-position residues on substrate peptides do not greatly influence the activity. In contrast, a proline at position 2, virtually abolishes deamidation of N-terminal glutamine. This chain is Protein N-terminal glutamine amidohydrolase, found in Homo sapiens (Human).